Here is a 140-residue protein sequence, read N- to C-terminus: Large ribosomal subunit protein uL16 (140 aa).

The protein belongs to the universal ribosomal protein uL16 family. In terms of assembly, part of the 50S ribosomal subunit.

Binds 23S rRNA and is also seen to make contacts with the A and possibly P site tRNAs. This chain is Large ribosomal subunit protein uL16, found in Cytophaga hutchinsonii (strain ATCC 33406 / DSM 1761 / CIP 103989 / NBRC 15051 / NCIMB 9469 / D465).